The sequence spans 457 residues: Argininosuccinate lyase (457 aa).

Belongs to the lyase 1 family. Argininosuccinate lyase subfamily.

The protein resides in the cytoplasm. The enzyme catalyses 2-(N(omega)-L-arginino)succinate = fumarate + L-arginine. It functions in the pathway amino-acid biosynthesis; L-arginine biosynthesis; L-arginine from L-ornithine and carbamoyl phosphate: step 3/3. This chain is Argininosuccinate lyase, found in Escherichia coli O9:H4 (strain HS).